A 271-amino-acid polypeptide reads, in one-letter code: Co-chaperone protein DjlA (271 aa).

Residues 1–6 (MQYWGK) are Periplasmic-facing. A helical transmembrane segment spans residues 7-31 (IIGVAVALLMGGGFWGVVLGLLIGH). Residues 32–271 (MFDKARSRKM…ELIKQQKGFK (240 aa)) lie on the Cytoplasmic side of the membrane. The J domain occupies 205-271 (DACNVLGVKP…ELIKQQKGFK (67 aa)).

In terms of assembly, homodimer.

The protein resides in the cell inner membrane. Regulatory DnaK co-chaperone. Direct interaction between DnaK and DjlA is needed for the induction of the wcaABCDE operon, involved in the synthesis of a colanic acid polysaccharide capsule, possibly through activation of the RcsB/RcsC phosphotransfer signaling pathway. The colanic acid capsule may help the bacterium survive conditions outside the host. This chain is Co-chaperone protein DjlA, found in Escherichia coli (strain K12).